A 764-amino-acid chain; its full sequence is Calpain-like protease palB/RIM13 (764 aa).

Residues 95–368 (GEFYPPLTVY…FKYFYINWNP (274 aa)) form the Calpain catalytic domain. Active-site residues include cysteine 165, histidine 318, and asparagine 336.

Belongs to the peptidase C2 family. PalB/RIM13 subfamily.

Required for the proteolytic cleavage of the transcription factor RIM101 in response to alkaline ambient pH. This chain is Calpain-like protease palB/RIM13, found in Debaryomyces hansenii (strain ATCC 36239 / CBS 767 / BCRC 21394 / JCM 1990 / NBRC 0083 / IGC 2968) (Yeast).